A 217-amino-acid chain; its full sequence is MRLVLLGAPGAGKGTQAVVISQKYNVPHISTGDIFRSNIKNGTELGRKAKEYIDKGLLVPDELTVDIVKDRISQPDCKAGFILDGFPRTIYQAERLDEILKELNVELDCALNIYVPDEEIIKRMSGRRVCSKCGMSYHIVYNQPKVENICDSCNGELIQRDDDKEETVIQRLNTYHKQTEPLIEYYEKKGKLLTVHGQEGVDDTTKEVLNALSGVKL.

10-15 (GAGKGT) contacts ATP. The NMP stretch occupies residues 30–59 (STGDIFRSNIKNGTELGRKAKEYIDKGLLV). AMP contacts are provided by residues Thr31, Arg36, 57–59 (LLV), 85–88 (GFPR), and Gln92. An LID region spans residues 126 to 163 (GRRVCSKCGMSYHIVYNQPKVENICDSCNGELIQRDDD). Arg127 serves as a coordination point for ATP. Zn(2+)-binding residues include Cys130 and Cys133. Residue 136–137 (SY) participates in ATP binding. Zn(2+) is bound by residues Cys150 and Cys153. Residues Arg160 and Arg171 each coordinate AMP. Glu199 serves as a coordination point for ATP.

It belongs to the adenylate kinase family. Monomer.

The protein localises to the cytoplasm. The catalysed reaction is AMP + ATP = 2 ADP. It functions in the pathway purine metabolism; AMP biosynthesis via salvage pathway; AMP from ADP: step 1/1. Catalyzes the reversible transfer of the terminal phosphate group between ATP and AMP. Plays an important role in cellular energy homeostasis and in adenine nucleotide metabolism. The protein is Adenylate kinase of Acetivibrio thermocellus (strain ATCC 27405 / DSM 1237 / JCM 9322 / NBRC 103400 / NCIMB 10682 / NRRL B-4536 / VPI 7372) (Clostridium thermocellum).